A 442-amino-acid polypeptide reads, in one-letter code: Protein cereblon (442 aa).

The segment at Met-1 to Asn-45 is disordered. Over residues Glu-24–Asp-35 the composition is skewed to acidic residues. Ser-25 is modified (phosphoserine). A Lon N-terminal domain is found at Ile-81–Thr-319. The 109-residue stretch at Cys-318–Ile-426 folds into the CULT domain. Cys-323 and Cys-326 together coordinate Zn(2+). 3 residues coordinate (S)-thalidomide: His-378, Trp-380, and Trp-386. Positions 391 and 394 each coordinate Zn(2+).

Belongs to the CRBN family. Interacts with KCNT1. Component of a DCX (DDB1-CUL4-X-box) protein ligase complex, at least composed of CRBN, CUL4A, DDB1 and RBX1. Interacts directly with DDB1. Interacts (in pomalidomide-bound form) with IKZF1 and IKZF3. Interacts with ILF2. Interacts with TRAF6 and ECSIT. Ubiquitinated, ubiquitination is mediated by its own DCX protein ligase complex. Widely expressed. Highly expressed in brain.

The protein resides in the cytoplasm. The protein localises to the nucleus. It localises to the membrane. The protein operates within protein modification; protein ubiquitination. Substrate recognition component of a DCX (DDB1-CUL4-X-box) E3 protein ligase complex that mediates the ubiquitination and subsequent proteasomal degradation of target proteins, such as MEIS2, ILF2 or GLUL. Normal degradation of key regulatory proteins is required for normal limb outgrowth and expression of the fibroblast growth factor FGF8. Maintains presynaptic glutamate release and consequently cognitive functions, such as memory and learning, by negatively regulating large-conductance calcium-activated potassium (BK) channels in excitatory neurons. Likely to function by regulating the assembly and neuronal surface expression of BK channels via its interaction with KCNT1. May also be involved in regulating anxiety-like behaviors via a BK channel-independent mechanism. Plays a negative role in TLR4 signaling by interacting with TRAF6 and ECSIT, leading to inhibition of ECSIT ubiquitination, an important step of the signaling. This Homo sapiens (Human) protein is Protein cereblon (CRBN).